The sequence spans 262 residues: 3-dehydro-D-guloside 4-epimerase (262 aa).

The active-site Proton donor/acceptor is the glutamate 146. The Mn(2+) site is built by glutamate 146 and aspartate 179. Substrate is bound at residue histidine 182. A Mn(2+)-binding site is contributed by histidine 205. Substrate is bound at residue arginine 211. Glutamate 240 functions as the Proton donor/acceptor in the catalytic mechanism. Glutamate 240 is a Mn(2+) binding site.

This sequence belongs to the hyi family. Requires Mn(2+) as cofactor.

The catalysed reaction is a 3-dehydro-D-guloside = a 3-dehydro-D-glucoside. In terms of biological role, catalyzes the epimerization at C4 of 3-dehydro-D-gulosides leading to 3-dehydro-D-glucosides. Probably functions in a metabolic pathway that transforms D-gulosides to D-glucosides. Can use methyl alpha-3-dehydro-D-glucoside and methyl beta-3-dehydro-D-glucoside as substrates in vitro. However, the actual specific physiological substrates for this metabolic pathway are unknown. Cannot act on D-psicose, D-fructose, D-tagatose, D-sorbose, L-xylulose, or L-ribulose. The protein is 3-dehydro-D-guloside 4-epimerase (ycjR) of Escherichia coli (strain K12).